We begin with the raw amino-acid sequence, 469 residues long: 3-isopropylmalate dehydratase large subunit (469 aa).

Positions 349, 410, and 413 each coordinate [4Fe-4S] cluster.

Belongs to the aconitase/IPM isomerase family. LeuC type 1 subfamily. Heterodimer of LeuC and LeuD. Requires [4Fe-4S] cluster as cofactor.

The catalysed reaction is (2R,3S)-3-isopropylmalate = (2S)-2-isopropylmalate. It participates in amino-acid biosynthesis; L-leucine biosynthesis; L-leucine from 3-methyl-2-oxobutanoate: step 2/4. Catalyzes the isomerization between 2-isopropylmalate and 3-isopropylmalate, via the formation of 2-isopropylmaleate. This is 3-isopropylmalate dehydratase large subunit from Neisseria gonorrhoeae (strain NCCP11945).